A 693-amino-acid chain; its full sequence is Polyribonucleotide nucleotidyltransferase (693 aa).

Residues Asp-490 and Asp-496 each coordinate Mg(2+). The KH domain maps to 557–617 (PRISWFFIDP…EKVQEAVEYI (61 aa)). In terms of domain architecture, S1 motif spans 627–691 (GDLYTGKVTR…DAGRLQFRRL (65 aa)).

It belongs to the polyribonucleotide nucleotidyltransferase family. Mg(2+) serves as cofactor.

Its subcellular location is the cytoplasm. The catalysed reaction is RNA(n+1) + phosphate = RNA(n) + a ribonucleoside 5'-diphosphate. Functionally, involved in mRNA degradation. Catalyzes the phosphorolysis of single-stranded polyribonucleotides processively in the 3'- to 5'-direction. This is Polyribonucleotide nucleotidyltransferase from Fervidobacterium nodosum (strain ATCC 35602 / DSM 5306 / Rt17-B1).